We begin with the raw amino-acid sequence, 275 residues long: Formamidopyrimidine-DNA glycosylase (275 aa).

The Schiff-base intermediate with DNA role is filled by proline 2. The active-site Proton donor is glutamate 3. Catalysis depends on lysine 58, which acts as the Proton donor; for beta-elimination activity. DNA contacts are provided by histidine 93, arginine 111, and arginine 156. The segment at 241–275 (FVYDRAGQPCRVCGTPVRQIVQGQRSTYFCPTCQR) adopts an FPG-type zinc-finger fold. Residue arginine 265 is the Proton donor; for delta-elimination activity of the active site.

It belongs to the FPG family. In terms of assembly, monomer. Zn(2+) serves as cofactor.

It catalyses the reaction Hydrolysis of DNA containing ring-opened 7-methylguanine residues, releasing 2,6-diamino-4-hydroxy-5-(N-methyl)formamidopyrimidine.. The enzyme catalyses 2'-deoxyribonucleotide-(2'-deoxyribose 5'-phosphate)-2'-deoxyribonucleotide-DNA = a 3'-end 2'-deoxyribonucleotide-(2,3-dehydro-2,3-deoxyribose 5'-phosphate)-DNA + a 5'-end 5'-phospho-2'-deoxyribonucleoside-DNA + H(+). Functionally, involved in base excision repair of DNA damaged by oxidation or by mutagenic agents. Acts as a DNA glycosylase that recognizes and removes damaged bases. Has a preference for oxidized purines, such as 7,8-dihydro-8-oxoguanine (8-oxoG). Has AP (apurinic/apyrimidinic) lyase activity and introduces nicks in the DNA strand. Cleaves the DNA backbone by beta-delta elimination to generate a single-strand break at the site of the removed base with both 3'- and 5'-phosphates. The chain is Formamidopyrimidine-DNA glycosylase from Burkholderia cenocepacia (strain HI2424).